The sequence spans 647 residues: Carotenoid phi-ring synthase (647 aa).

FAD-binding positions include alanine 67, 86–87 (EA), lysine 94, and tyrosine 120. A Rieske domain is found at 322 to 416 (VASIPKREVP…VREAGEMLVI (95 aa)). [2Fe-2S] cluster is bound by residues cysteine 362, histidine 364, cysteine 380, and histidine 383. FAD contacts are provided by aspartate 601 and methionine 612.

The protein belongs to the carotenoid/retinoid oxidoreductase family. The cofactor is FAD. [2Fe-2S] cluster serves as cofactor.

It carries out the reaction a carotenoid beta-end derivative + 2 A = a carotenoid phi-end derivative + 2 AH2. The protein operates within carotenoid biosynthesis. Involved in the biosynthesis of chlorobactene, a carotenoid with aromatic end group. Catalyzes the introduction of two additional double bonds into the ionone ring of gamma-carotene to produce chlorobactene. The reaction includes an intramolecular methyl transfer from position C1 to position C2 of the ring. This Chlorobaculum tepidum (strain ATCC 49652 / DSM 12025 / NBRC 103806 / TLS) (Chlorobium tepidum) protein is Carotenoid phi-ring synthase.